A 504-amino-acid chain; its full sequence is 2-isopropylmalate synthase (504 aa).

A Pyruvate carboxyltransferase domain is found at 6-267 (IIVFDTTLRD…YTDINFKEIY (262 aa)). Mn(2+)-binding residues include aspartate 15, histidine 201, histidine 203, and asparagine 237. The tract at residues 391-504 (EIIALSSSEC…ALNSYISMKQ (114 aa)) is regulatory domain.

Belongs to the alpha-IPM synthase/homocitrate synthase family. LeuA type 1 subfamily. As to quaternary structure, homodimer. It depends on Mn(2+) as a cofactor.

The protein resides in the cytoplasm. It carries out the reaction 3-methyl-2-oxobutanoate + acetyl-CoA + H2O = (2S)-2-isopropylmalate + CoA + H(+). The protein operates within amino-acid biosynthesis; L-leucine biosynthesis; L-leucine from 3-methyl-2-oxobutanoate: step 1/4. Catalyzes the condensation of the acetyl group of acetyl-CoA with 3-methyl-2-oxobutanoate (2-ketoisovalerate) to form 3-carboxy-3-hydroxy-4-methylpentanoate (2-isopropylmalate). The protein is 2-isopropylmalate synthase of Campylobacter hominis (strain ATCC BAA-381 / DSM 21671 / CCUG 45161 / LMG 19568 / NCTC 13146 / CH001A).